Here is a 369-residue protein sequence, read N- to C-terminus: tRNA(Met) cytidine acetate ligase (369 aa).

Residues 7-20 (VAEF…HKYL), G96, N152, and R175 each bind ATP.

This sequence belongs to the TmcAL family.

It is found in the cytoplasm. The enzyme catalyses cytidine(34) in elongator tRNA(Met) + acetate + ATP = N(4)-acetylcytidine(34) in elongator tRNA(Met) + AMP + diphosphate. Its function is as follows. Catalyzes the formation of N(4)-acetylcytidine (ac(4)C) at the wobble position of elongator tRNA(Met), using acetate and ATP as substrates. First activates an acetate ion to form acetyladenylate (Ac-AMP) and then transfers the acetyl group to tRNA to form ac(4)C34. This Streptococcus agalactiae serotype III (strain NEM316) protein is tRNA(Met) cytidine acetate ligase.